Consider the following 459-residue polypeptide: Serine permease SerP1 (459 aa).

Transmembrane regions (helical) follow at residues 19 to 39 (IQLI…AGKT), 42 to 62 (MTGP…FFFL), 97 to 117 (SYWL…GTYI), 119 to 139 (FWLP…LLFG), 153 to 173 (FWFA…AIIL), 212 to 232 (FVGA…IGMT), 254 to 274 (ILLF…WHYI), 281 to 301 (FVIV…NFVV), 341 to 361 (AGIP…APVL), 370 to 390 (AFNF…FITL), 412 to 432 (PTIA…SLFF), and 436 to 456 (TFYP…YSHF).

It belongs to the amino acid-polyamine-organocation (APC) superfamily. Amino acid transporter (AAT) (TC 2.A.3.1) family.

The protein resides in the cell membrane. Transports L-serine, L-threonine and L-cysteine with high affinity. Stereoselective, with a strong preference for L-serine. Is the main L-serine transporter and is responsible for optimal growth in media containing free amino acids as the sole source of amino acids. Is also the main transporter for L-threonine. The chain is Serine permease SerP1 from Lactococcus lactis subsp. cremoris (strain MG1363).